The primary structure comprises 137 residues: Small ribosomal subunit protein uS12 (137 aa).

2 disordered regions span residues 1–22 (MPTI…SKSP) and 35–57 (ATNN…TPKK). A compositionally biased stretch (basic residues) spans 9-18 (RKPRKSKVSK). 3-methylthioaspartic acid is present on aspartate 102.

Belongs to the universal ribosomal protein uS12 family. As to quaternary structure, part of the 30S ribosomal subunit. Contacts proteins S8 and S17. May interact with IF1 in the 30S initiation complex.

Its function is as follows. With S4 and S5 plays an important role in translational accuracy. In terms of biological role, interacts with and stabilizes bases of the 16S rRNA that are involved in tRNA selection in the A site and with the mRNA backbone. Located at the interface of the 30S and 50S subunits, it traverses the body of the 30S subunit contacting proteins on the other side and probably holding the rRNA structure together. The combined cluster of proteins S8, S12 and S17 appears to hold together the shoulder and platform of the 30S subunit. The protein is Small ribosomal subunit protein uS12 of Leuconostoc mesenteroides subsp. mesenteroides (strain ATCC 8293 / DSM 20343 / BCRC 11652 / CCM 1803 / JCM 6124 / NCDO 523 / NBRC 100496 / NCIMB 8023 / NCTC 12954 / NRRL B-1118 / 37Y).